The following is a 248-amino-acid chain: Glutathione S-transferase omega-2 (248 aa).

A GST N-terminal domain is found at 22–101 (GVIRIYSMRF…YLDDVYPGRK (80 aa)). The Nucleophile role is filled by Cys-32. Residues Lys-59, Ile-72, and 85–86 (ES) each bind glutathione. A GST C-terminal domain is found at 106–231 (DPYERARQKM…VFLGFLNLYF (126 aa)).

Belongs to the GST superfamily. Omega family.

The enzyme catalyses RX + glutathione = an S-substituted glutathione + a halide anion + H(+). It catalyses the reaction L-dehydroascorbate + 2 glutathione = glutathione disulfide + L-ascorbate. It carries out the reaction methylarsonate + 2 glutathione + H(+) = methylarsonous acid + glutathione disulfide + H2O. Functionally, exhibits glutathione-dependent thiol transferase activity. Has high dehydroascorbate reductase activity and may contribute to the recycling of ascorbic acid. Participates in the biotransformation of inorganic arsenic and reduces monomethylarsonic acid (MMA). In Mus musculus (Mouse), this protein is Glutathione S-transferase omega-2 (Gsto2).